Reading from the N-terminus, the 1119-residue chain is Synaptojanin (1119 aa).

The 320-residue stretch at 119–438 (LQRLLSSQMF…GDQCSTIYAG (320 aa)) folds into the SAC domain. The segment at 532–826 (GTWNVNGGKN…DRSELKTSDH (295 aa)) is catalytic. Disordered stretches follow at residues 986-1005 (SLTL…ARSE) and 1042-1119 (EHVP…PKNM). Residues 1050–1072 (PQSNNNKSPPQACLFNPFTQSAP) show a composition bias toward low complexity. Composition is skewed to pro residues over residues 1073–1085 (SPAP…PLPP) and 1093–1119 (PGPP…PKNM).

Belongs to the synaptojanin family. It in the central section; belongs to the inositol 1,4,5-trisphosphate 5-phosphatase family.

It is found in the cytoplasmic vesicle. Its subcellular location is the secretory vesicle. The protein localises to the synaptic vesicle. It localises to the synapse. It carries out the reaction a 1,2-diacyl-sn-glycero-3-phospho-(1D-myo-inositol-4,5-bisphosphate) + H2O = a 1,2-diacyl-sn-glycero-3-phospho-(1D-myo-inositol 4-phosphate) + phosphate. In terms of biological role, probable inositol 5-phosphatase which regulates synaptic vesicle recycling in neurons by regulating clathrin-mediated endocytosis. The polypeptide is Synaptojanin (Caenorhabditis elegans).